The following is a 281-amino-acid chain: MRSEMLTALLTLAVLLQVAGSLKIAAFNIRSFGETKMSNATLTSYIVRILQRYDIALIQEVRDSHLTAVGKLLDKLNEKAADTYRFVASEPLGRRTYKERYLFVYRPDQVSVLDSYYYDDGCEPCGTDTFSREPAVVRFSSPSTKVREFAIVPLHSAPEDAVAEIDALYDVYLDVQKKWGLQDVMLMGDFNADYSYVTSSQWSSIRLRTNPAFKWLIPDTADTTATSTNCAYDRIVVAGPLLQDAVVPNSAAPFNFQAAYGLSNQLAQAISDHYPVEVTLA.

Positions 1 to 21 (MRSEMLTALLTLAVLLQVAGS) are cleaved as a signal peptide. An N-linked (GlcNAc...) asparagine glycan is attached at Asn-39. The active site involves Glu-99. A disulfide bridge connects residues Cys-122 and Cys-125. Residue His-155 is part of the active site.

This sequence belongs to the DNase I family. Ca(2+) is required as a cofactor. Mg(2+) serves as cofactor. As to expression, equivalent levels in pancreas and parotid gland, low amounts in kidney, liver, small intestine, stomach and thymus.

The protein localises to the secreted. Its subcellular location is the zymogen granule. The protein resides in the nucleus envelope. It catalyses the reaction Endonucleolytic cleavage to 5'-phosphodinucleotide and 5'-phosphooligonucleotide end-products.. In terms of biological role, serum endocuclease secreted into body fluids by a wide variety of exocrine and endocrine organs. Expressed by non-hematopoietic tissues and preferentially cleaves protein-free DNA. Among other functions, seems to be involved in cell death by apoptosis. Binds specifically to G-actin and blocks actin polymerization. Preferentially attacks double-stranded DNA and produces oligonucleotides with 5'-phospho and 3'-hydroxy termini. Together with DNASE1L3, plays a key role in degrading neutrophil extracellular traps (NETs). NETs are mainly composed of DNA fibers and are released by neutrophils to bind pathogens during inflammation. Degradation of intravascular NETs by DNASE1 and DNASE1L3 is required to prevent formation of clots that obstruct blood vessels and cause organ damage following inflammation. The chain is Deoxyribonuclease-1 (DNASE1) from Oryctolagus cuniculus (Rabbit).